A 413-amino-acid chain; its full sequence is Gamma-glutamyl phosphate reductase (413 aa).

It belongs to the gamma-glutamyl phosphate reductase family.

Its subcellular location is the cytoplasm. The enzyme catalyses L-glutamate 5-semialdehyde + phosphate + NADP(+) = L-glutamyl 5-phosphate + NADPH + H(+). Its pathway is amino-acid biosynthesis; L-proline biosynthesis; L-glutamate 5-semialdehyde from L-glutamate: step 2/2. In terms of biological role, catalyzes the NADPH-dependent reduction of L-glutamate 5-phosphate into L-glutamate 5-semialdehyde and phosphate. The product spontaneously undergoes cyclization to form 1-pyrroline-5-carboxylate. The polypeptide is Gamma-glutamyl phosphate reductase (Geobacillus sp. (strain WCH70)).